We begin with the raw amino-acid sequence, 470 residues long: Alpha-1A adrenergic receptor (470 aa).

Over 1 to 27 the chain is Extracellular; sequence MTPSSVTLNCSNCSHVLAPELNTVKAV. N-linked (GlcNAc...) asparagine glycans are attached at residues N9 and N12. The helical transmembrane segment at 28–51 threads the bilayer; that stretch reads VLGMVLGIFILFGVIGNILVILSV. Residues 52–64 are Cytoplasmic-facing; it reads VCHRHLQTVTYYF. Residues 65 to 88 traverse the membrane as a helical segment; it reads IVNLAVADLLLSSTVLPFSAIFEI. The Extracellular segment spans residues 89 to 99; the sequence is LDRWVFGRVFC. C99 and C176 are oxidised to a cystine. The chain crosses the membrane as a helical span at residues 100 to 122; it reads NIWAAVDVLCCTASIMSLCVISV. Topologically, residues 123 to 143 are cytoplasmic; that stretch reads DRYIGVSYPLRYPAIMTKRRA. The helical transmembrane segment at 144 to 167 threads the bilayer; the sequence is LLAVMLLWVLSVIISIGPLFGWKE. Residues 168 to 181 are Extracellular-facing; the sequence is PAPEDETVCKITEE. The helical transmembrane segment at 182-205 threads the bilayer; sequence PGYAIFSAVGSFYLPLAIILAMYC. Topologically, residues 206 to 271 are cytoplasmic; sequence RVYVVAQKES…FSREKKAAKT (66 aa). Residues 272 to 295 form a helical membrane-spanning segment; sequence LGIVVGCFVLCWLPFFLVLPIGSI. At 296–303 the chain is on the extracellular side; the sequence is FPAYRPSD. Residues 304–327 traverse the membrane as a helical segment; the sequence is TVFKITFWLGYFNSCINPIIYLCS. The Cytoplasmic segment spans residues 328–470; that stretch reads NQEFKKAFQS…LSLSEKGESV (143 aa). C343 carries S-palmitoyl cysteine lipidation. A disordered region spans residues 375–416; the sequence is GAPCRLSPSSSVALSRTPSSRDSREWRVFSGGPINSGPGPTE. Over residues 381-392 the composition is skewed to polar residues; it reads SPSSSVALSRTP.

It belongs to the G-protein coupled receptor 1 family. Adrenergic receptor subfamily. ADRA1A sub-subfamily.

Its subcellular location is the cell membrane. Functionally, this alpha-adrenergic receptor mediates its action by association with G proteins that activate a phosphatidylinositol-calcium second messenger system. In Oryzias latipes (Japanese rice fish), this protein is Alpha-1A adrenergic receptor (adra1a).